The following is a 447-amino-acid chain: MASAPNANGDAAVSDYDLMLKLAQNLDRHMIFPLLEFSAGQLVDEESGVVRDEAKAREITQAKYSLLKNSNMTDYVANLYCELAGVEEPPAEFADKKQKVFSQLQNLEQQTSKIIELLEREDVVNNLRSDKVANLEFLKREHQVTMDMVNALFDLGNLQYSCGNYGDASEMLYRFRVLSTDNDKVAFATWGRLACEILTMNWESAMEELVKVRETIDTKLSQNPLAQLQHRTALTHWALFPLFNFEKAREPILELFFNAGYINTIQANCPWILRYLAVAVITNRGRAKNPGIHQKQMKDVVRIVKQEAYEYQDPITRFVHALAIDFDFEEAQRQLVLAEEVLRSDFFLLAHADDFVDSARHLIFESYCKIHARISLKDLSARLGLNADAAEKWIVNLIRDTRLDAKIDYKEGTVVMNHPPSSVYQQVIEKTKGGFFRTQVLTAAIAK.

One can recognise a PCI domain in the interval 253–421 (LELFFNAGYI…GTVVMNHPPS (169 aa)).

Belongs to the eIF-3 subunit E family. As to quaternary structure, component of the eukaryotic translation initiation factor 3 (eIF-3) complex.

The protein localises to the cytoplasm. Functionally, component of the eukaryotic translation initiation factor 3 (eIF-3) complex, which is involved in protein synthesis of a specialized repertoire of mRNAs and, together with other initiation factors, stimulates binding of mRNA and methionyl-tRNAi to the 40S ribosome. The eIF-3 complex specifically targets and initiates translation of a subset of mRNAs involved in cell proliferation. The protein is Eukaryotic translation initiation factor 3 subunit E of Chaetomium globosum (strain ATCC 6205 / CBS 148.51 / DSM 1962 / NBRC 6347 / NRRL 1970) (Soil fungus).